Here is a 450-residue protein sequence, read N- to C-terminus: 3-phosphoshikimate 1-carboxyvinyltransferase (450 aa).

Positions 1–23 are disordered; sequence MSSHGAPIPMTSSACGPLTGEAR. 3-phosphoshikimate-binding residues include K28, S29, and R33. Residue K28 coordinates phosphoenolpyruvate. 2 residues coordinate phosphoenolpyruvate: G101 and R129. 3-phosphoshikimate-binding residues include S174, Q176, D327, and K354. Q176 is a binding site for phosphoenolpyruvate. D327 serves as the catalytic Proton acceptor. 2 residues coordinate phosphoenolpyruvate: R358 and R403.

This sequence belongs to the EPSP synthase family. As to quaternary structure, monomer.

Its subcellular location is the cytoplasm. The catalysed reaction is 3-phosphoshikimate + phosphoenolpyruvate = 5-O-(1-carboxyvinyl)-3-phosphoshikimate + phosphate. It functions in the pathway metabolic intermediate biosynthesis; chorismate biosynthesis; chorismate from D-erythrose 4-phosphate and phosphoenolpyruvate: step 6/7. Catalyzes the transfer of the enolpyruvyl moiety of phosphoenolpyruvate (PEP) to the 5-hydroxyl of shikimate-3-phosphate (S3P) to produce enolpyruvyl shikimate-3-phosphate and inorganic phosphate. This is 3-phosphoshikimate 1-carboxyvinyltransferase from Roseobacter denitrificans (strain ATCC 33942 / OCh 114) (Erythrobacter sp. (strain OCh 114)).